The chain runs to 737 residues: 1,4-alpha-glucan branching enzyme GlgB (737 aa).

The active-site Nucleophile is the D419. The active-site Proton donor is E472.

The protein belongs to the glycosyl hydrolase 13 family. GlgB subfamily. In terms of assembly, monomer.

The enzyme catalyses Transfers a segment of a (1-&gt;4)-alpha-D-glucan chain to a primary hydroxy group in a similar glucan chain.. It participates in glycan biosynthesis; glycogen biosynthesis. Its function is as follows. Catalyzes the formation of the alpha-1,6-glucosidic linkages in glycogen by scission of a 1,4-alpha-linked oligosaccharide from growing alpha-1,4-glucan chains and the subsequent attachment of the oligosaccharide to the alpha-1,6 position. The sequence is that of 1,4-alpha-glucan branching enzyme GlgB from Mesorhizobium japonicum (strain LMG 29417 / CECT 9101 / MAFF 303099) (Mesorhizobium loti (strain MAFF 303099)).